The sequence spans 678 residues: Glycine--tRNA ligase beta subunit (678 aa).

It belongs to the class-II aminoacyl-tRNA synthetase family. In terms of assembly, tetramer of two alpha and two beta subunits.

The protein localises to the cytoplasm. It carries out the reaction tRNA(Gly) + glycine + ATP = glycyl-tRNA(Gly) + AMP + diphosphate. The polypeptide is Glycine--tRNA ligase beta subunit (Streptococcus pneumoniae (strain Taiwan19F-14)).